Here is a 249-residue protein sequence, read N- to C-terminus: Putative ABC transporter ATP-binding protein GSU1281 (249 aa).

An ABC transporter domain is found at 6-236 (VEVRDLCHCY…DELLATCRLE (231 aa)). 39-46 (GANGAGKS) is an ATP binding site.

It belongs to the ABC transporter superfamily.

The protein localises to the cell inner membrane. Functionally, probably part of an ABC transporter complex. Responsible for energy coupling to the transport system. This is Putative ABC transporter ATP-binding protein GSU1281 from Geobacter sulfurreducens (strain ATCC 51573 / DSM 12127 / PCA).